Consider the following 95-residue polypeptide: LSM complex subunit LSM2 (95 aa).

One can recognise a Sm domain in the interval 2 to 76 (LFFSFFKTLV…VRYVYLNKNM (75 aa)).

Belongs to the snRNP Sm proteins family. As to quaternary structure, component of the heptameric LSM1-LSM7 complex that forms a seven-membered ring structure with a donut shape. The LSm subunits are arranged in the order LSM1, LSM2, LSM3, LSM6, LSM5, LSM7 and LSM4. Except for LSM1, where a C-terminal helix crosses the ring structure to form additional interactions with LSM3 and LSM6, each subunit interacts only with its two neighboring subunits. The LSM1-LSM7 complex interacts with PAT1; within the complex PAT1 has direct interactions with LSM2 and LSM3. The LSM1-LSM7 complex interacts with XRN1. Component of the heptameric LSM2-LSM8 complex that forms a seven-membered ring structure with a donut shape; an RNA strand can pass through the hole in the center of the ring structure. The LSm subunits are arranged in the order LSM8, LSM2, LSM3, LSM6, LSM5, LSM7 and LSM4. Interacts with U6 snRNA SNR6 and chaperone PRP24; to promote formation of the U4/U6-U5 tri-snRNP (small nuclear ribonucleoprotein) complex, the LSM2-LSM8 complex preferentially binds U6 snRNA that has been modified to contain a non-cyclic 3' phosphate. Component of the spliceosome U4/U6-U5 tri-snRNP complex composed of the U4, U6 and U5 snRNAs and at least PRP3, PRP4, PRP6, PRP8, PRP18, PRP31, PRP38, SNU13, SNU23, SNU66, SNU114, SPP381, SMB1, SMD1, SMD2, SMD3, SMX2, SMX3, LSM2, LSM3, LSM4, LSM5, LSM6, LSM7, LSM8, BRR2 and DIB1. May be found in a complex comprising LSM2-LSM7 without LSM1 or LSM8; the complex associates with pre-P RNA and snoRNA SNR5.

It is found in the nucleus. Its subcellular location is the nucleolus. The protein localises to the cytoplasm. Its function is as follows. Component of LSm protein complexes, which are involved in RNA processing and may function in a chaperone-like manner. Component of the cytoplasmic LSM1-LSM7 complex which is involved in mRNA degradation by activating the decapping step. Together with PAT1, the LSM1-LSM7 complex binds to osmotic stress-activated mRNAs to attenuate the osmotic stress response, probably by limiting ribosome access to the mRNA and consequently translation. Component of the nuclear LSM2-LSM8 complex, which is involved in spliceosome assembly. The LSM2-LSM8 complex plays a role in the biogenesis of the spliceosomal U4/U6-U5 tri-snRNP complex by accelerating PRP24-mediated annealing of U4/U6 di-snRNA. The LSM2-LSM8 complex binds U6 snRNA terminating with a non-cyclic 3' phosphate group. LSM2-LSM8 is probably also involved in degradation of nuclear pre-mRNA by targeting them for decapping. LSM2-LSM8 could be involved in processing of pre-tRNAs, pre-rRNAs and U3 snoRNA, although involvement may be indirect. In a complex that probably contains LSM2-LSM7, but not LSM1 or LSM8, associates with the precursor of the RNA component of RNase P (pre-P RNA) and may be involved in maturing pre-P RNA; the complex also associates with snoRNA SNR5. The polypeptide is LSM complex subunit LSM2 (LSM2) (Saccharomyces cerevisiae (strain ATCC 204508 / S288c) (Baker's yeast)).